A 189-amino-acid polypeptide reads, in one-letter code: UPF0312 protein VC_A0539 (189 aa).

A signal peptide spans 1–22 (MKKTLMAVGLAAVMSIPFAANA).

Belongs to the UPF0312 family. Type 1 subfamily.

The protein localises to the periplasm. The polypeptide is UPF0312 protein VC_A0539 (Vibrio cholerae serotype O1 (strain ATCC 39315 / El Tor Inaba N16961)).